A 349-amino-acid chain; its full sequence is Macrophage-capping protein (349 aa).

Methionine 1 carries the post-translational modification N-acetylmethionine. Gelsolin-like repeat units follow at residues 28-107, 147-222, and 264-342; these read KLKP…DLFM, KNIR…AEMI, and LTKV…PIFK. Residues 138 to 147 carry the Nuclear localization signal motif; it reads RKLYQVKGKK. Serine 338 carries the post-translational modification Phosphoserine.

This sequence belongs to the villin/gelsolin family. In terms of assembly, interacts with NUP62. Interacts with NUTF2 and RAN; involved in CAPG nuclear import. Phosphorylated.

It localises to the nucleus. It is found in the cytoplasm. The protein localises to the melanosome. The protein resides in the cell projection. Its subcellular location is the lamellipodium. It localises to the ruffle. Functionally, calcium-sensitive protein which reversibly blocks the barbed ends of actin filaments but does not sever preformed actin filaments. May play an important role in macrophage function. May play a role in regulating cytoplasmic and/or nuclear structures through potential interactions with actin. May bind DNA. Uncapping occurs either when Ca(2+) falls or when the concentration of polyphosphoinositide rises, both at low and high Ca(2+). In Rattus norvegicus (Rat), this protein is Macrophage-capping protein (Capg).